The sequence spans 245 residues: Type III pantothenate kinase (245 aa).

Position 6–13 (6–13) interacts with ATP; sequence DQGNTILK. Residues Tyr86 and 93-96 contribute to the substrate site; that span reads GTDR. Asp95 serves as the catalytic Proton acceptor. Position 116 (Asp116) interacts with K(+). Residue Thr119 coordinates ATP. Residue Thr171 participates in substrate binding.

It belongs to the type III pantothenate kinase family. Homodimer. NH4(+) serves as cofactor. K(+) is required as a cofactor.

Its subcellular location is the cytoplasm. It carries out the reaction (R)-pantothenate + ATP = (R)-4'-phosphopantothenate + ADP + H(+). Its pathway is cofactor biosynthesis; coenzyme A biosynthesis; CoA from (R)-pantothenate: step 1/5. Functionally, catalyzes the phosphorylation of pantothenate (Pan), the first step in CoA biosynthesis. In Azobacteroides pseudotrichonymphae genomovar. CFP2, this protein is Type III pantothenate kinase.